We begin with the raw amino-acid sequence, 452 residues long: MEHEVAVSGGDSSLEEITGSSKLKPSKNTAIKCLKCDKVYIFPSDKDDCLAHLYMEHRLVIADVEDIALLEDYLQYWEKEFHTHEFEQYCTTMFLDQLPDGKYAKNEKYYLLCDILPQDYELRRRLKEKRLSEALERHQFELTDRTFSKECLFCRAIIKGLRADYLDHLFDKHFLLVGKPEKLVYVDELLDHLEENLNRLMCLYCEKIFRDRPTLKEHMRKKGHKRINPNRREYDKYFLINYNRVPTAPTPRKQHLQKRRRETASVSTVADPETGSVDFDKHFARPDSDGEHDSDWSDWAADGEPSSIKCLFCHHLGDNFTALKKHMHEVHRLDFEKATSSLNFYQRVKVVNYLRRQMCLLRCVTCDLQFDEEELLVEHMAQESHHGIGDKESWDKPEFFFPYIENDGLLCVLDDSGGDDPDVDTVRIISEDSLAQINKDAERLSLENFKLL.

The segment at 200–224 (LMCLYCEKIFRDRPTLKEHMRKKGH) adopts a C2H2-type 1 zinc-finger fold. Residues 248 to 271 (APTPRKQHLQKRRRETASVSTVAD) are disordered. A compositionally biased stretch (basic residues) spans 252-261 (RKQHLQKRRR). The C2H2-type 2 zinc-finger motif lies at 361–385 (LRCVTCDLQFDEEELLVEHMAQESH).

This sequence belongs to the ZNF277 family. Interacts with components of the origin recognition complex (ORC) complex, Orc2 and Orc3, components of the SAGA transcription coactivator-HAT complex, Gcn5 and e(y)2, components of the mRNP biogenesis THO complex, thoc5 and e(y)2, and a component of the TFIID complex, TBP. Also interacts with polybromo, a component of the chromatin remodeling SWI/SNF complex.

It localises to the nucleus. The protein resides in the cytoplasm. In terms of biological role, DNA binding protein which is involved in the positive regulation of both basal and inducible transcription. Mainly localizes to active promoter sites and interacts with components of various transcription and replication regulatory complexes, such as the ORC, SAGA, THO, TFIID and SWI/SNF complexes. It may therefore regulate transcription by promoting the association of these complexes to their binding sites. This chain is Zinc finger protein 277, found in Drosophila melanogaster (Fruit fly).